The primary structure comprises 463 residues: Exodeoxyribonuclease 7 large subunit (463 aa).

Belongs to the XseA family. In terms of assembly, heterooligomer composed of large and small subunits.

Its subcellular location is the cytoplasm. The catalysed reaction is Exonucleolytic cleavage in either 5'- to 3'- or 3'- to 5'-direction to yield nucleoside 5'-phosphates.. Bidirectionally degrades single-stranded DNA into large acid-insoluble oligonucleotides, which are then degraded further into small acid-soluble oligonucleotides. In Klebsiella pneumoniae (strain 342), this protein is Exodeoxyribonuclease 7 large subunit.